The sequence spans 219 residues: Ras-related protein Rab-3B (219 aa).

Ala2 carries the N-acetylalanine modification. Residues Ser31, Ser32, Val33, Gly34, Lys35, Thr36, Ser37, Pro49, and Ser53 each contribute to the GTP site. Residue Thr36 coordinates Mg(2+). A Switch 1 motif is present at residues Asp45–Asp58. Mg(2+) is bound by residues Thr54 and Asp77. Positions Thr78–Met96 match the Switch 2 motif. Gly80 lines the GTP pocket. A Phosphothreonine modification is found at Thr86. The GTP site is built by Asn135, Lys136, Asp138, Ala166, and Lys167. Residues Ser188 and Ser190 each carry the phosphoserine modification. S-geranylgeranyl cysteine attachment occurs at residues Cys217 and Cys219. A Cysteine methyl ester modification is found at Cys219.

Belongs to the small GTPase superfamily. Rab family. As to quaternary structure, interacts with RPH3A and RPH3AL. Interacts with RIMS1. Interacts with RIMS2. The GTP-bound form interacts with GAS8/DRC4 (via coiled-coil domains). Interacts with GDI2, and CHM; phosphorylation at Thr-86 disrupts these interactions. Interacts with MADD (via uDENN domain); the GTP-bound form is preferred for interaction. Requires Mg(2+) as cofactor. In terms of processing, phosphorylation of Thr-86 in the switch II region by LRRK2 prevents the association of RAB regulatory proteins, including CHM and RAB GDP dissociation inhibitor GDI2.

Its subcellular location is the cell membrane. The protein localises to the golgi apparatus. The enzyme catalyses GTP + H2O = GDP + phosphate + H(+). Its activity is regulated as follows. Regulated by guanine nucleotide exchange factors (GEFs) which promote the exchange of bound GDP for free GTP. Regulated by GTPase activating proteins (GAPs) which increase the GTP hydrolysis activity. Inhibited by GDP dissociation inhibitors (GDIs) which prevent Rab-GDP dissociation. Its function is as follows. The small GTPases Rab are key regulators of intracellular membrane trafficking, from the formation of transport vesicles to their fusion with membranes. Rabs cycle between an inactive GDP-bound form and an active GTP-bound form that is able to recruit to membranes different sets of downstream effectors directly responsible for vesicle formation, movement, tethering and fusion. The chain is Ras-related protein Rab-3B from Rattus norvegicus (Rat).